Reading from the N-terminus, the 477-residue chain is Methylenetetrahydrofolate--tRNA-(uracil-5-)-methyltransferase TrmFO (477 aa).

15-20 (GAGLAG) contributes to the FAD binding site.

The protein belongs to the MnmG family. TrmFO subfamily. The cofactor is FAD.

It is found in the cytoplasm. It carries out the reaction uridine(54) in tRNA + (6R)-5,10-methylene-5,6,7,8-tetrahydrofolate + NADH + H(+) = 5-methyluridine(54) in tRNA + (6S)-5,6,7,8-tetrahydrofolate + NAD(+). The enzyme catalyses uridine(54) in tRNA + (6R)-5,10-methylene-5,6,7,8-tetrahydrofolate + NADPH + H(+) = 5-methyluridine(54) in tRNA + (6S)-5,6,7,8-tetrahydrofolate + NADP(+). Functionally, catalyzes the folate-dependent formation of 5-methyl-uridine at position 54 (M-5-U54) in all tRNAs. The chain is Methylenetetrahydrofolate--tRNA-(uracil-5-)-methyltransferase TrmFO from Rhodopseudomonas palustris (strain BisB5).